A 124-amino-acid polypeptide reads, in one-letter code: Small ribosomal subunit protein uS12 (124 aa).

The segment at 1–30 (MPTIQQLVRKGRTPKVTKTKAPALKANPQQ) is disordered. The segment covering 9–18 (RKGRTPKVTK) has biased composition (basic residues).

Belongs to the universal ribosomal protein uS12 family. As to quaternary structure, part of the 30S ribosomal subunit. Contacts proteins S8 and S17. May interact with IF1 in the 30S initiation complex.

Functionally, with S4 and S5 plays an important role in translational accuracy. Interacts with and stabilizes bases of the 16S rRNA that are involved in tRNA selection in the A site and with the mRNA backbone. Located at the interface of the 30S and 50S subunits, it traverses the body of the 30S subunit contacting proteins on the other side and probably holding the rRNA structure together. The combined cluster of proteins S8, S12 and S17 appears to hold together the shoulder and platform of the 30S subunit. The protein is Small ribosomal subunit protein uS12 of Leifsonia xyli subsp. xyli (strain CTCB07).